Reading from the N-terminus, the 353-residue chain is S-adenosylmethionine:tRNA ribosyltransferase-isomerase (353 aa).

The protein belongs to the QueA family. Monomer.

It is found in the cytoplasm. It carries out the reaction 7-aminomethyl-7-carbaguanosine(34) in tRNA + S-adenosyl-L-methionine = epoxyqueuosine(34) in tRNA + adenine + L-methionine + 2 H(+). It participates in tRNA modification; tRNA-queuosine biosynthesis. Functionally, transfers and isomerizes the ribose moiety from AdoMet to the 7-aminomethyl group of 7-deazaguanine (preQ1-tRNA) to give epoxyqueuosine (oQ-tRNA). This chain is S-adenosylmethionine:tRNA ribosyltransferase-isomerase, found in Burkholderia vietnamiensis (strain G4 / LMG 22486) (Burkholderia cepacia (strain R1808)).